Here is a 225-residue protein sequence, read N- to C-terminus: ATP-dependent Clp protease proteolytic subunit (225 aa).

Residue Ser126 is the Nucleophile of the active site. His151 is a catalytic residue.

It belongs to the peptidase S14 family. Fourteen ClpP subunits assemble into 2 heptameric rings which stack back to back to give a disk-like structure with a central cavity, resembling the structure of eukaryotic proteasomes.

The protein resides in the cytoplasm. The catalysed reaction is Hydrolysis of proteins to small peptides in the presence of ATP and magnesium. alpha-casein is the usual test substrate. In the absence of ATP, only oligopeptides shorter than five residues are hydrolyzed (such as succinyl-Leu-Tyr-|-NHMec, and Leu-Tyr-Leu-|-Tyr-Trp, in which cleavage of the -Tyr-|-Leu- and -Tyr-|-Trp bonds also occurs).. In terms of biological role, cleaves peptides in various proteins in a process that requires ATP hydrolysis. Has a chymotrypsin-like activity. Plays a major role in the degradation of misfolded proteins. This chain is ATP-dependent Clp protease proteolytic subunit, found in Psychrobacter arcticus (strain DSM 17307 / VKM B-2377 / 273-4).